Consider the following 243-residue polypeptide: MSKTHFGFETVEETDKAKKVAGVFHSVANNYDLMNDLMSAGMHRAWKAFTIAQANVRPGYKVLDIAAGTGDLTKAFAKAAGPTGEVWHTDINESMLRVGRDRLLDKGIVTPSLLCDAEKIPFPDNYFDVVTVAFGLRNMTHKDVALAEMRRVAKPGGRVMVLEFSKVWEPLKKAYDLYSFKVLPWLGDKFAKDADSYRYLAESIRMHPDQDTLKTMMEQAGLDAVKYYNLSGGVVALHLGTKY.

S-adenosyl-L-methionine is bound by residues threonine 69, aspartate 90, and 116–117 (DA).

Belongs to the class I-like SAM-binding methyltransferase superfamily. MenG/UbiE family.

The catalysed reaction is a 2-demethylmenaquinol + S-adenosyl-L-methionine = a menaquinol + S-adenosyl-L-homocysteine + H(+). It carries out the reaction a 2-methoxy-6-(all-trans-polyprenyl)benzene-1,4-diol + S-adenosyl-L-methionine = a 5-methoxy-2-methyl-3-(all-trans-polyprenyl)benzene-1,4-diol + S-adenosyl-L-homocysteine + H(+). The protein operates within quinol/quinone metabolism; menaquinone biosynthesis; menaquinol from 1,4-dihydroxy-2-naphthoate: step 2/2. Its pathway is cofactor biosynthesis; ubiquinone biosynthesis. Methyltransferase required for the conversion of demethylmenaquinol (DMKH2) to menaquinol (MKH2) and the conversion of 2-polyprenyl-6-methoxy-1,4-benzoquinol (DDMQH2) to 2-polyprenyl-3-methyl-6-methoxy-1,4-benzoquinol (DMQH2). This chain is Ubiquinone/menaquinone biosynthesis C-methyltransferase UbiE, found in Burkholderia multivorans (strain ATCC 17616 / 249).